The following is a 1035-amino-acid chain: Cell-division control histidine kinase PdhS (1035 aa).

An important for polar localization region spans residues 1–613 (MSGSYPFIDI…HADGSEEPVD (613 aa)). The segment at 500 to 533 (QGLANTRAESETPVSETSSIEPVEPTPPVKTRSE) is disordered. Residues 614-1035 (AHLNAIAWRG…VFPPTRVLAD (422 aa)) form an interaction with DivK region. Residues 659–730 (HVEELKTILD…YLHGLSGNGV (72 aa)) form the PAS domain. One can recognise a Histidine kinase domain in the interval 802-1031 (RISHEIRTPL…VVEIVFPPTR (230 aa)). Phosphohistidine; by autocatalysis is present on His805.

Interacts with DivK.

It is found in the cytoplasm. The catalysed reaction is ATP + protein L-histidine = ADP + protein N-phospho-L-histidine.. In terms of biological role, functions as a polar differentiation marker. Essential protein that, by localizing in the old pole of dividing cells, controls cell division and maturation, probably through control of DivK phosphorylation status and cellular distribution, which in turn regulates CtrA, a transcriptional regulator of the minB operon. The asymmetrical localization of this protein is probably required for cells to enter a new division cycle. This is Cell-division control histidine kinase PdhS (pdhS) from Brucella melitensis biotype 1 (strain ATCC 23456 / CCUG 17765 / NCTC 10094 / 16M).